Here is a 429-residue protein sequence, read N- to C-terminus: Keratin, type I cytoskeletal 18 (429 aa).

The segment at 2–78 (SYSRSVYSSS…NVNLIGGGQN (77 aa)) is head. Residues 79 to 114 (EKETMQDLNDRLASYLERVRSLEAANKKLEVQIRQH) form a coil 1A region. The IF rod domain occupies 79–389 (EKETMQDLND…RLLEGDGSFD (311 aa)). The segment at 115 to 130 (TEKKGPSKDWSPYYKT) is linker 1. A coil 1B region spans residues 131 to 222 (IEDLRKQVFD…KNHQDDVTEL (92 aa)). The segment at 223-246 (QAQVARSAVTVEVDAPKSQDLGKI) is linker 12. Residues 247-385 (MTELRAQYDG…HTYRRLLEGD (139 aa)) form a coil 2 region. Residues 386 to 429 (GSFDLQDAVPTVTTQTVKKVITTTQRIVDGKVVSESNDTEVLKS) are tail.

It belongs to the intermediate filament family. As to quaternary structure, heterotetramer of two type I and two type II keratins. Keratin-18 associates with keratin-8. Post-translationally, phosphorylated. In terms of processing, proteolytically cleaved by caspases during epithelial cell apoptosis.

Functionally, when phosphorylated, plays a role in filament reorganization. This is Keratin, type I cytoskeletal 18 from Xenopus tropicalis (Western clawed frog).